A 293-amino-acid chain; its full sequence is 4-hydroxy-tetrahydrodipicolinate synthase (293 aa).

Residue threonine 44 participates in pyruvate binding. Catalysis depends on tyrosine 132, which acts as the Proton donor/acceptor. Lysine 160 serves as the catalytic Schiff-base intermediate with substrate. Isoleucine 204 provides a ligand contact to pyruvate.

This sequence belongs to the DapA family. Homotetramer; dimer of dimers.

It is found in the cytoplasm. It carries out the reaction L-aspartate 4-semialdehyde + pyruvate = (2S,4S)-4-hydroxy-2,3,4,5-tetrahydrodipicolinate + H2O + H(+). It functions in the pathway amino-acid biosynthesis; L-lysine biosynthesis via DAP pathway; (S)-tetrahydrodipicolinate from L-aspartate: step 3/4. Its function is as follows. Catalyzes the condensation of (S)-aspartate-beta-semialdehyde [(S)-ASA] and pyruvate to 4-hydroxy-tetrahydrodipicolinate (HTPA). The sequence is that of 4-hydroxy-tetrahydrodipicolinate synthase from Hyphomonas neptunium (strain ATCC 15444).